We begin with the raw amino-acid sequence, 487 residues long: NADH-quinone oxidoreductase subunit N (487 aa).

14 consecutive transmembrane segments (helical) span residues 8–28, 37–57, 71–91, 104–124, 125–145, 159–179, 203–223, 235–255, 269–289, 303–323, 327–347, 374–394, 408–427, and 449–469; these read LLAL…MLAI, AFVV…IVMA, GYAV…CTFG, EFYL…GSRH, LASL…LVGY, YMVL…LLYA, LMGG…LAPF, PAPV…CVLL, IHWL…LLAL, ISHF…QMPV, GVYL…ISMM, AVLT…GFIG, WWLS…YYLR, and AITS…ALGL.

Belongs to the complex I subunit 2 family. In terms of assembly, NDH-1 is composed of 14 different subunits. Subunits NuoA, H, J, K, L, M, N constitute the membrane sector of the complex.

The protein resides in the cell inner membrane. It carries out the reaction a quinone + NADH + 5 H(+)(in) = a quinol + NAD(+) + 4 H(+)(out). NDH-1 shuttles electrons from NADH, via FMN and iron-sulfur (Fe-S) centers, to quinones in the respiratory chain. The immediate electron acceptor for the enzyme in this species is believed to be ubiquinone. Couples the redox reaction to proton translocation (for every two electrons transferred, four hydrogen ions are translocated across the cytoplasmic membrane), and thus conserves the redox energy in a proton gradient. The polypeptide is NADH-quinone oxidoreductase subunit N (Aeromonas hydrophila subsp. hydrophila (strain ATCC 7966 / DSM 30187 / BCRC 13018 / CCUG 14551 / JCM 1027 / KCTC 2358 / NCIMB 9240 / NCTC 8049)).